Here is a 347-residue protein sequence, read N- to C-terminus: Heme A synthase (347 aa).

8 consecutive transmembrane segments (helical) span residues 14 to 34 (VKVWLCICSIGILLMVLVGGI), 95 to 115 (YFHRLLGRIVGLIFLLPFLYF), 125 to 145 (LIVNFIIICVLILFQGVMGWL), 166 to 186 (LLLALLIFYLLWRQFLSAVIL), 198 to 218 (LIFYVISILIVIQITFGSLVA), 260 to 280 (FIHEVIAVLILVIVSATLLIL), 289 to 309 (LLLVCLLIQLTFGILTFIYNV), and 311 to 331 (IALASLHQVTAFILFAINTYL). Histidine 262 provides a ligand contact to heme. Histidine 317 lines the heme pocket.

It belongs to the COX15/CtaA family. Type 2 subfamily. In terms of assembly, interacts with CtaB. The cofactor is heme b.

The protein resides in the cell membrane. It carries out the reaction Fe(II)-heme o + 2 A + H2O = Fe(II)-heme a + 2 AH2. It participates in porphyrin-containing compound metabolism; heme A biosynthesis; heme A from heme O: step 1/1. Catalyzes the conversion of heme O to heme A by two successive hydroxylations of the methyl group at C8. The first hydroxylation forms heme I, the second hydroxylation results in an unstable dihydroxymethyl group, which spontaneously dehydrates, resulting in the formyl group of heme A. The sequence is that of Heme A synthase from Ehrlichia canis (strain Jake).